A 180-amino-acid chain; its full sequence is ATP synthase subunit b (180 aa).

A helical transmembrane segment spans residues Ile26 to Phe46.

It belongs to the ATPase B chain family. In terms of assembly, F-type ATPases have 2 components, F(1) - the catalytic core - and F(0) - the membrane proton channel. F(1) has five subunits: alpha(3), beta(3), gamma(1), delta(1), epsilon(1). F(0) has three main subunits: a(1), b(2) and c(10-14). The alpha and beta chains form an alternating ring which encloses part of the gamma chain. F(1) is attached to F(0) by a central stalk formed by the gamma and epsilon chains, while a peripheral stalk is formed by the delta and b chains.

The protein resides in the cell membrane. F(1)F(0) ATP synthase produces ATP from ADP in the presence of a proton or sodium gradient. F-type ATPases consist of two structural domains, F(1) containing the extramembraneous catalytic core and F(0) containing the membrane proton channel, linked together by a central stalk and a peripheral stalk. During catalysis, ATP synthesis in the catalytic domain of F(1) is coupled via a rotary mechanism of the central stalk subunits to proton translocation. Its function is as follows. Component of the F(0) channel, it forms part of the peripheral stalk, linking F(1) to F(0). The polypeptide is ATP synthase subunit b (Mycoplasmopsis pulmonis (strain UAB CTIP) (Mycoplasma pulmonis)).